A 251-amino-acid chain; its full sequence is DNA repair protein RecO (251 aa).

Belongs to the RecO family.

In terms of biological role, involved in DNA repair and RecF pathway recombination. The sequence is that of DNA repair protein RecO from Streptococcus mutans serotype c (strain ATCC 700610 / UA159).